A 1663-amino-acid chain; its full sequence is Glutamine-rich protein 2 (1663 aa).

Disordered stretches follow at residues 80–239 (HGGF…LVPA), 423–481 (GLVQ…GTGQ), 575–615 (AQPR…QHGL), 880–925 (TYQQ…QVYP), and 948–984 (RGPG…APGQ). Polar residues-rich tracts occupy residues 84–103 (TSLT…QPSI) and 131–150 (GVSS…QQQP). Residues 171-182 (SDSDRHRSREKL) are compositionally biased toward basic and acidic residues. The span at 206–217 (QPSSVPASQSQV) shows a compositional bias: low complexity. The segment covering 958-975 (HGQEGLDPNRTRASDRHG) has biased composition (basic and acidic residues). 2 coiled-coil regions span residues 1085 to 1160 (KTVK…MENS) and 1286 to 1325 (EDHR…KADK). Positions 1609–1619 (TRLPGILRKDS) are enriched in basic and acidic residues. Positions 1609-1663 (TRLPGILRKDSSGTSKRKSQQPRPHVHRPPSLSSNGQLPSRPQSAQISAGNTSER) are disordered. The segment covering 1623–1636 (SKRKSQQPRPHVHR) has biased composition (basic residues). A compositionally biased stretch (polar residues) spans 1639 to 1663 (SLSSNGQLPSRPQSAQISAGNTSER).

In terms of assembly, interacts with AKAP3, ODF2 and TSSK4. Interacts with AKAP4. Expressed in the sperm.

It localises to the nucleus membrane. The protein localises to the nucleus. The protein resides in the cytoplasm. It is found in the cell projection. Its subcellular location is the cilium. It localises to the flagellum. In terms of biological role, has an essential role in the formation of sperm flagella and flagellar structure maintainance. It acts as a suppressor of ubiquitination and degradation of proteins involved in flagellar development and motility. This chain is Glutamine-rich protein 2 (QRICH2), found in Homo sapiens (Human).